Reading from the N-terminus, the 427-residue chain is L-rhamnose isomerase (427 aa).

Residues histidine 264, aspartate 296, and aspartate 298 each contribute to the Mn(2+) site.

Belongs to the rhamnose isomerase family. The cofactor is Mn(2+).

It localises to the cytoplasm. It carries out the reaction L-rhamnopyranose = L-rhamnulose. It functions in the pathway carbohydrate degradation; L-rhamnose degradation; glycerone phosphate from L-rhamnose: step 1/3. Its function is as follows. Catalyzes the interconversion of L-rhamnose and L-rhamnulose. The polypeptide is L-rhamnose isomerase (Lactiplantibacillus plantarum (strain ATCC BAA-793 / NCIMB 8826 / WCFS1) (Lactobacillus plantarum)).